A 264-amino-acid chain; its full sequence is Thiazole synthase (264 aa).

Lys-98 acts as the Schiff-base intermediate with DXP in catalysis. Residues Gly-159, 185-186 (AG), and 207-208 (AS) contribute to the 1-deoxy-D-xylulose 5-phosphate site. A disordered region spans residues 243-264 (HFAEASSPPEGRAHLDPERPAF). The span at 253-264 (GRAHLDPERPAF) shows a compositional bias: basic and acidic residues.

The protein belongs to the ThiG family. In terms of assembly, homotetramer. Forms heterodimers with either ThiH or ThiS.

The protein localises to the cytoplasm. The enzyme catalyses [ThiS sulfur-carrier protein]-C-terminal-Gly-aminoethanethioate + 2-iminoacetate + 1-deoxy-D-xylulose 5-phosphate = [ThiS sulfur-carrier protein]-C-terminal Gly-Gly + 2-[(2R,5Z)-2-carboxy-4-methylthiazol-5(2H)-ylidene]ethyl phosphate + 2 H2O + H(+). The protein operates within cofactor biosynthesis; thiamine diphosphate biosynthesis. Functionally, catalyzes the rearrangement of 1-deoxy-D-xylulose 5-phosphate (DXP) to produce the thiazole phosphate moiety of thiamine. Sulfur is provided by the thiocarboxylate moiety of the carrier protein ThiS. In vitro, sulfur can be provided by H(2)S. The protein is Thiazole synthase of Streptomyces avermitilis (strain ATCC 31267 / DSM 46492 / JCM 5070 / NBRC 14893 / NCIMB 12804 / NRRL 8165 / MA-4680).